Here is a 679-residue protein sequence, read N- to C-terminus: Enzymatic polyprotein (679 aa).

Residues 40–130 (LHCFVDTGAS…LYEPFIQFTD (91 aa)) are protease. Residue aspartate 45 is part of the active site. A Reverse transcriptase domain is found at 272–452 (LKVIKPSKSP…KKINFLGLEI (181 aa)).

This sequence belongs to the caulimoviridae enzymatic polyprotein family.

The catalysed reaction is DNA(n) + a 2'-deoxyribonucleoside 5'-triphosphate = DNA(n+1) + diphosphate. In terms of biological role, encodes for at least two polypeptides: protease (PR) and reverse transcriptase (RT). The protease processes the polyprotein in cis. Reverse transcriptase is multifunctional enzyme that converts the viral RNA genome into dsDNA in viral cytoplasmic capsids. This enzyme displays a DNA polymerase activity that can copy either DNA or RNA templates, and a ribonuclease H (RNase H) activity that cleaves the RNA strand of RNA-DNA heteroduplexes in a partially processive 3'- to 5'-endonucleasic mode. Neo-synthesized pregenomic RNA (pgRNA) are encapsidated, and reverse-transcribed inside the nucleocapsid. Partial (+)DNA is synthesized from the (-)DNA template and generates the relaxed circular DNA (RC-DNA) genome. After budding and infection, the RC-DNA migrates in the nucleus, and is converted into a plasmid-like covalently closed circular DNA (cccDNA). The sequence is that of Enzymatic polyprotein from Arabidopsis thaliana (Mouse-ear cress).